The following is a 470-amino-acid chain: Ribosomal protein uS12 methylthiotransferase RimO (470 aa).

In terms of domain architecture, MTTase N-terminal spans 33-143; it reads NKIGFVSLGC…VLEHVHQYAP (111 aa). The [4Fe-4S] cluster site is built by Cys-42, Cys-78, Cys-107, Cys-175, Cys-179, and Cys-182. In terms of domain architecture, Radical SAM core spans 161–398; it reads LTPKHYAYLK…MLVQQEISAA (238 aa). In terms of domain architecture, TRAM spans 401-467; the sequence is QKRIGSTMQV…EYDLWGSILH (67 aa).

It belongs to the methylthiotransferase family. RimO subfamily. It depends on [4Fe-4S] cluster as a cofactor.

The protein resides in the cytoplasm. The enzyme catalyses L-aspartate(89)-[ribosomal protein uS12]-hydrogen + (sulfur carrier)-SH + AH2 + 2 S-adenosyl-L-methionine = 3-methylsulfanyl-L-aspartate(89)-[ribosomal protein uS12]-hydrogen + (sulfur carrier)-H + 5'-deoxyadenosine + L-methionine + A + S-adenosyl-L-homocysteine + 2 H(+). Functionally, catalyzes the methylthiolation of an aspartic acid residue of ribosomal protein uS12. The sequence is that of Ribosomal protein uS12 methylthiotransferase RimO from Vibrio cholerae serotype O1 (strain ATCC 39315 / El Tor Inaba N16961).